Consider the following 277-residue polypeptide: Large ribosomal subunit protein uL2c (277 aa).

Residues 225-277 (MNPCDHPHGGGEGRSPIGRPKPVTPWGKPALGKKTRSPKRFSNKYIIRSRKMV) form a disordered region. Residues 255-277 (LGKKTRSPKRFSNKYIIRSRKMV) are compositionally biased toward basic residues.

This sequence belongs to the universal ribosomal protein uL2 family. In terms of assembly, part of the 50S ribosomal subunit.

Its subcellular location is the plastid. It localises to the chloroplast. This chain is Large ribosomal subunit protein uL2c (rpl2), found in Euglena gracilis.